The primary structure comprises 88 residues: Elongation factor 1-beta (88 aa).

Belongs to the EF-1-beta/EF-1-delta family.

Functionally, promotes the exchange of GDP for GTP in EF-1-alpha/GDP, thus allowing the regeneration of EF-1-alpha/GTP that could then be used to form the ternary complex EF-1-alpha/GTP/AAtRNA. The protein is Elongation factor 1-beta of Methanosphaera stadtmanae (strain ATCC 43021 / DSM 3091 / JCM 11832 / MCB-3).